A 1007-amino-acid polypeptide reads, in one-letter code: Beta-galactosidase A (1007 aa).

An N-terminal signal peptide occupies residues 1 to 18 (MKLSSACAIALLAAQAAG). Residues tyrosine 96 and 140–142 (NAE) contribute to the substrate site. Asparagine 156 is a glycosylation site (N-linked (GlcNAc...) asparagine). Asparagine 199 is a binding site for substrate. The active-site Proton donor is the glutamate 200. 2 cysteine pairs are disulfide-bonded: cysteine 205–cysteine 206 and cysteine 266–cysteine 315. Catalysis depends on glutamate 298, which acts as the Nucleophile. Tyrosine 364 provides a ligand contact to substrate. Asparagine 402, asparagine 422, asparagine 478, asparagine 522, asparagine 622, asparagine 739, asparagine 760, asparagine 777, asparagine 805, and asparagine 914 each carry an N-linked (GlcNAc...) asparagine glycan.

The protein belongs to the glycosyl hydrolase 35 family.

It localises to the secreted. The enzyme catalyses Hydrolysis of terminal non-reducing beta-D-galactose residues in beta-D-galactosides.. Its function is as follows. Cleaves beta-linked terminal galactosyl residues from gangliosides, glycoproteins, and glycosaminoglycans. This Aspergillus niger (strain ATCC MYA-4892 / CBS 513.88 / FGSC A1513) protein is Beta-galactosidase A (lacA).